We begin with the raw amino-acid sequence, 604 residues long: Elongation factor 4 1 (604 aa).

Residues 10-191 (EHIRNFCIIA…AIVDSVPAPT (182 aa)) form the tr-type G domain. Residues 22–27 (DHGKST) and 138–141 (NKID) contribute to the GTP site.

It belongs to the TRAFAC class translation factor GTPase superfamily. Classic translation factor GTPase family. LepA subfamily.

The protein resides in the cell inner membrane. It catalyses the reaction GTP + H2O = GDP + phosphate + H(+). In terms of biological role, required for accurate and efficient protein synthesis under certain stress conditions. May act as a fidelity factor of the translation reaction, by catalyzing a one-codon backward translocation of tRNAs on improperly translocated ribosomes. Back-translocation proceeds from a post-translocation (POST) complex to a pre-translocation (PRE) complex, thus giving elongation factor G a second chance to translocate the tRNAs correctly. Binds to ribosomes in a GTP-dependent manner. The polypeptide is Elongation factor 4 1 (Rhodopirellula baltica (strain DSM 10527 / NCIMB 13988 / SH1)).